A 638-amino-acid polypeptide reads, in one-letter code: Carbon monoxide dehydrogenase (638 aa).

C46, C55, C58, C63, and C74 together coordinate [4Fe-4S] cluster. The [Ni-4Fe-5S] cluster site is built by H265, C299, C343, C452, C483, and C524.

Belongs to the Ni-containing carbon monoxide dehydrogenase family. In terms of assembly, homodimer. [4Fe-4S] cluster serves as cofactor. [Ni-4Fe-5S] cluster is required as a cofactor.

It catalyses the reaction CO + 2 oxidized [2Fe-2S]-[ferredoxin] + H2O = 2 reduced [2Fe-2S]-[ferredoxin] + CO2 + 2 H(+). CODH oxidizes carbon monoxide coupled, via CooF, to the reduction of a hydrogen cation by a hydrogenase (possibly CooH). The protein is Carbon monoxide dehydrogenase (cooS) of Methanopyrus kandleri (strain AV19 / DSM 6324 / JCM 9639 / NBRC 100938).